The sequence spans 913 residues: Alanine--tRNA ligase (913 aa).

4 residues coordinate Zn(2+): His600, His604, Cys703, and His707.

The protein belongs to the class-II aminoacyl-tRNA synthetase family. The cofactor is Zn(2+).

The protein localises to the cytoplasm. It catalyses the reaction tRNA(Ala) + L-alanine + ATP = L-alanyl-tRNA(Ala) + AMP + diphosphate. Catalyzes the attachment of alanine to tRNA(Ala) in a two-step reaction: alanine is first activated by ATP to form Ala-AMP and then transferred to the acceptor end of tRNA(Ala). Also edits incorrectly charged Ser-tRNA(Ala) and Gly-tRNA(Ala) via its editing domain. This chain is Alanine--tRNA ligase, found in Methanothrix thermoacetophila (strain DSM 6194 / JCM 14653 / NBRC 101360 / PT) (Methanosaeta thermophila).